The following is a 153-amino-acid chain: UPF0756 membrane protein lmo1568 (153 aa).

Helical transmembrane passes span 6-26, 54-74, 80-100, and 117-137; these read MLFLLLFLLLGLIAKNNSLII, WGVTIITVAILIPIATGQIGF, SFKSAAGWIGLGAGIAVSILA, and LVFGTILAVVLFRGIAAGPVI.

The protein belongs to the UPF0756 family.

The protein localises to the cell membrane. This is UPF0756 membrane protein lmo1568 from Listeria monocytogenes serovar 1/2a (strain ATCC BAA-679 / EGD-e).